The primary structure comprises 79 residues: Small ribosomal subunit protein uS17 (79 aa).

It belongs to the universal ribosomal protein uS17 family. In terms of assembly, part of the 30S ribosomal subunit.

In terms of biological role, one of the primary rRNA binding proteins, it binds specifically to the 5'-end of 16S ribosomal RNA. This chain is Small ribosomal subunit protein uS17, found in Bartonella henselae (strain ATCC 49882 / DSM 28221 / CCUG 30454 / Houston 1) (Rochalimaea henselae).